The primary structure comprises 623 residues: Dictomallein-5 (623 aa).

The first 21 residues, 1-21 (MKIFIIKIILVLFNYVLLSYS), serve as a signal peptide directing secretion. In terms of domain architecture, Peptidase M66 spans 174–435 (PNVGQDYTLK…QNYFKNSIYY (262 aa)). His327 lines the Zn(2+) pocket. The active site involves Glu328. His331 and His337 together coordinate Zn(2+).

It belongs to the dictomallein family. Zn(2+) is required as a cofactor.

It is found in the secreted. This chain is Dictomallein-5 (dtmlE), found in Dictyostelium discoideum (Social amoeba).